Reading from the N-terminus, the 207-residue chain is dTTP/UTP pyrophosphatase (207 aa).

Aspartate 79 functions as the Proton acceptor in the catalytic mechanism.

Belongs to the Maf family. YhdE subfamily. It depends on a divalent metal cation as a cofactor.

The protein resides in the cytoplasm. It carries out the reaction dTTP + H2O = dTMP + diphosphate + H(+). The enzyme catalyses UTP + H2O = UMP + diphosphate + H(+). Its function is as follows. Nucleoside triphosphate pyrophosphatase that hydrolyzes dTTP and UTP. May have a dual role in cell division arrest and in preventing the incorporation of modified nucleotides into cellular nucleic acids. This chain is dTTP/UTP pyrophosphatase, found in Rhodopseudomonas palustris (strain HaA2).